The following is a 78-amino-acid chain: MDRYWEQDPMRPMVYRDFLGEMEYPGYSMPMQMEIDEDDFGPMDMQFEVGGISPFQMKPEDSDFFNKFEDDFDDSDIN.

As to expression, expressed in siliques and anthers.

Its function is as follows. Mediates responses to the synthetic auxin 2,4-dichlorophenoxyacetic acid (2,4-D). Not involved in the response to indole-3-acetic acid (IAA). May interact with RUB modification-related components and may regulate the culling-ring ubiquitin E3 ligase complex (CRL) activity. The polypeptide is Small acidic protein 2 (SMAP2) (Arabidopsis thaliana (Mouse-ear cress)).